The following is a 320-amino-acid chain: Malate dehydrogenase (320 aa).

Residues 10–15 (GAGQIG) and D34 each bind NAD(+). Substrate-binding residues include R83 and R89. NAD(+)-binding positions include N96 and 119–121 (ITN). Residues N121 and R152 each contribute to the substrate site. Residue H176 is the Proton acceptor of the active site.

The protein belongs to the LDH/MDH superfamily. MDH type 3 family.

The catalysed reaction is (S)-malate + NAD(+) = oxaloacetate + NADH + H(+). Catalyzes the reversible oxidation of malate to oxaloacetate. The sequence is that of Malate dehydrogenase from Ruegeria pomeroyi (strain ATCC 700808 / DSM 15171 / DSS-3) (Silicibacter pomeroyi).